A 502-amino-acid chain; its full sequence is Sulfate adenylyltransferase (502 aa).

The N-terminal stretch occupies residues Met-1 to Tyr-167. The catalytic stretch occupies residues Asp-168–Lys-393. Gln-195 lines the sulfate pocket. ATP contacts are provided by residues Gln-195 to Asn-198 and Gly-289 to His-292. Active-site residues include Thr-196, Arg-197, and Asn-198. Arg-197 serves as a coordination point for sulfate. Ala-293 contributes to the sulfate binding site. Val-331 is an ATP binding site. The segment at Gln-394–Phe-502 is required for oligomerization; adenylyl-sulfate kinase-like.

Belongs to the sulfate adenylyltransferase family. Homohexamer. Dimer of trimers.

The protein resides in the cytoplasm. It catalyses the reaction sulfate + ATP + H(+) = adenosine 5'-phosphosulfate + diphosphate. It functions in the pathway sulfur metabolism; hydrogen sulfide biosynthesis; sulfite from sulfate: step 1/3. In terms of biological role, catalyzes the first intracellular reaction of sulfate assimilation, forming adenosine-5'-phosphosulfate (APS) from inorganic sulfate and ATP. Plays an important role in sulfate activation as a component of the biosynthesis pathway of sulfur-containing amino acids. The polypeptide is Sulfate adenylyltransferase (Kluyveromyces lactis (strain ATCC 8585 / CBS 2359 / DSM 70799 / NBRC 1267 / NRRL Y-1140 / WM37) (Yeast)).